A 154-amino-acid chain; its full sequence is Crossover junction endodeoxyribonuclease RuvC (154 aa).

Catalysis depends on residues D7, E67, and D139. The Mg(2+) site is built by D7, E67, and D139.

Belongs to the RuvC family. In terms of assembly, homodimer which binds Holliday junction (HJ) DNA. The HJ becomes 2-fold symmetrical on binding to RuvC with unstacked arms; it has a different conformation from HJ DNA in complex with RuvA. In the full resolvosome a probable DNA-RuvA(4)-RuvB(12)-RuvC(2) complex forms which resolves the HJ. Mg(2+) serves as cofactor.

The protein resides in the cytoplasm. It carries out the reaction Endonucleolytic cleavage at a junction such as a reciprocal single-stranded crossover between two homologous DNA duplexes (Holliday junction).. Functionally, the RuvA-RuvB-RuvC complex processes Holliday junction (HJ) DNA during genetic recombination and DNA repair. Endonuclease that resolves HJ intermediates. Cleaves cruciform DNA by making single-stranded nicks across the HJ at symmetrical positions within the homologous arms, yielding a 5'-phosphate and a 3'-hydroxyl group; requires a central core of homology in the junction. The consensus cleavage sequence is 5'-(A/T)TT(C/G)-3'. Cleavage occurs on the 3'-side of the TT dinucleotide at the point of strand exchange. HJ branch migration catalyzed by RuvA-RuvB allows RuvC to scan DNA until it finds its consensus sequence, where it cleaves and resolves the cruciform DNA. The protein is Crossover junction endodeoxyribonuclease RuvC of Prochlorococcus marinus (strain MIT 9303).